Reading from the N-terminus, the 342-residue chain is MTTFLAKNWSSLIKPTKVQYEAVDNNPNIKTMVVEPLERGLGLTLGNSLRRVLLSSLRGAAITSIKIPGVEHELSPVSGVKEDLTDIILNIRDVIVKMDSVQKCNLRLEVTGPAVVTAGMITVTDKQDVTILNPQHVICNLSKGFNLEMDLICEQGKGYVPTSCLHNSDSPIGAIHLDALFNPVRRVSYKVENSMVGQMTNYDKLIITVETNGVVNPDAALGLAARILLDQLQVFINFQEVEEEKPEKLELQTINPVLLKKVYELELSVRSQNCLKNENIVYVGDLVARTETQMLKTANFGRKSLNELKKVLANFNLEFGMKDIGWPPENLESLAKKHEDQY.

The alpha N-terminal domain (alpha-NTD) stretch occupies residues 1–239; that stretch reads MTTFLAKNWS…DQLQVFINFQ (239 aa). The segment at 254–342 is alpha C-terminal domain (alpha-CTD); that stretch reads INPVLLKKVY…SLAKKHEDQY (89 aa).

It belongs to the RNA polymerase alpha chain family. Homodimer. The RNAP catalytic core consists of 2 alpha, 1 beta, 1 beta' and 1 omega subunit. When a sigma factor is associated with the core the holoenzyme is formed, which can initiate transcription.

The enzyme catalyses RNA(n) + a ribonucleoside 5'-triphosphate = RNA(n+1) + diphosphate. In terms of biological role, DNA-dependent RNA polymerase catalyzes the transcription of DNA into RNA using the four ribonucleoside triphosphates as substrates. The protein is DNA-directed RNA polymerase subunit alpha of Orientia tsutsugamushi (strain Ikeda) (Rickettsia tsutsugamushi).